The following is a 689-amino-acid chain: Glycine--tRNA ligase beta subunit (689 aa).

This sequence belongs to the class-II aminoacyl-tRNA synthetase family. As to quaternary structure, tetramer of two alpha and two beta subunits.

It is found in the cytoplasm. The enzyme catalyses tRNA(Gly) + glycine + ATP = glycyl-tRNA(Gly) + AMP + diphosphate. The sequence is that of Glycine--tRNA ligase beta subunit from Acinetobacter baumannii (strain ATCC 17978 / DSM 105126 / CIP 53.77 / LMG 1025 / NCDC KC755 / 5377).